We begin with the raw amino-acid sequence, 448 residues long: Adenylosuccinate synthetase (448 aa).

GTP is bound by residues glycine 36–lysine 42 and glycine 64–threonine 66. The Proton acceptor role is filled by aspartate 37. Mg(2+)-binding residues include aspartate 37 and glycine 64. IMP-binding positions include aspartate 37–lysine 40, asparagine 62–histidine 65, threonine 154, arginine 168, asparagine 246, threonine 261, and arginine 325. Residue histidine 65 is the Proton donor of the active site. Residue valine 321–arginine 327 coordinates substrate. Residues arginine 327, lysine 353–aspartate 355, and glycine 436–glycine 438 each bind GTP.

The protein belongs to the adenylosuccinate synthetase family. In terms of assembly, homodimer. The cofactor is Mg(2+).

The protein localises to the cytoplasm. The catalysed reaction is IMP + L-aspartate + GTP = N(6)-(1,2-dicarboxyethyl)-AMP + GDP + phosphate + 2 H(+). The protein operates within purine metabolism; AMP biosynthesis via de novo pathway; AMP from IMP: step 1/2. Plays an important role in the de novo pathway and in the salvage pathway of purine nucleotide biosynthesis. Catalyzes the first committed step in the biosynthesis of AMP from IMP. The protein is Adenylosuccinate synthetase of Drosophila mojavensis (Fruit fly).